The primary structure comprises 399 residues: MADGIDRRADDRMEFNTSKEVTVAPTFEDMHLKESLLRGIYAYGYESPSAVQSRAIVQICKGRDTIAQAQSGTGKTATFSISILQVIDTVVRESQALVLSPTRELATQIQSVIMALGDYMNVQCHACIGGTNIGEDIRKLDYGQHVVSGTPGRVADMIRRRHLRTRHIKMLVLDEADELLNRGFREQIYDVYRYLPPATQVVVVSATLPYDVLDMTTKFMTDPVRVLVKRDELTLEGIKQYFIAVEKEEWKFDTLCDLYDTLTITQAVIFCNTRRKVDWLTDKMREANFTVSSMHGEMPQKERDSIMQDFRQGNSRVLISTDVWARGIDVQQVSLVINYDLPTNRENYIHRIGRSGRFGRKGVAINFVTSDDVRILRDIELYYSTQIDEMPMNVADLLS.

Positions 25 to 53 (PTFEDMHLKESLLRGIYAYGYESPSAVQS) match the Q motif motif. Residues 56–226 (IVQICKGRDT…TKFMTDPVRV (171 aa)) form the Helicase ATP-binding domain. Residue 69-76 (AQSGTGKT) coordinates ATP. Positions 174 to 177 (DEAD) match the DEAD box motif. The Helicase C-terminal domain occupies 237–398 (GIKQYFIAVE…EMPMNVADLL (162 aa)).

Belongs to the DEAD box helicase family. DDX48/FAL1 subfamily.

It localises to the nucleus. The protein localises to the nucleolus. It carries out the reaction ATP + H2O = ADP + phosphate + H(+). ATP-dependent RNA helicase involved in 40S ribosomal subunit biogenesis. Required for the processing and cleavage of 35S pre-rRNA at sites A0, A1, and A2, leading to mature 18S rRNA. The chain is ATP-dependent RNA helicase fal1 (fal1) from Aspergillus niger (strain ATCC MYA-4892 / CBS 513.88 / FGSC A1513).